The chain runs to 331 residues: Glyceraldehyde-3-phosphate dehydrogenase (331 aa).

Residues 12–13 (RI), Asp34, Arg78, and Thr120 contribute to the NAD(+) site. Residues 149–151 (SCT), Thr180, 209–210 (TG), and Arg232 each bind D-glyceraldehyde 3-phosphate. Residue Cys150 is the Nucleophile of the active site. Position 314 (Asn314) interacts with NAD(+).

It belongs to the glyceraldehyde-3-phosphate dehydrogenase family. In terms of assembly, homotetramer.

It is found in the cytoplasm. The catalysed reaction is D-glyceraldehyde 3-phosphate + phosphate + NAD(+) = (2R)-3-phospho-glyceroyl phosphate + NADH + H(+). It participates in carbohydrate degradation; glycolysis; pyruvate from D-glyceraldehyde 3-phosphate: step 1/5. Catalyzes the oxidative phosphorylation of glyceraldehyde 3-phosphate (G3P) to 1,3-bisphosphoglycerate (BPG) using the cofactor NAD. The first reaction step involves the formation of a hemiacetal intermediate between G3P and a cysteine residue, and this hemiacetal intermediate is then oxidized to a thioester, with concomitant reduction of NAD to NADH. The reduced NADH is then exchanged with the second NAD, and the thioester is attacked by a nucleophilic inorganic phosphate to produce BPG. This is Glyceraldehyde-3-phosphate dehydrogenase (gapA) from Salmonella typhi.